Reading from the N-terminus, the 261-residue chain is Sulfur carrier protein FdhD (261 aa).

C105 serves as the catalytic Cysteine persulfide intermediate. Position 245–250 (245–250 (FIRGDR)) interacts with Mo-bis(molybdopterin guanine dinucleotide).

This sequence belongs to the FdhD family.

The protein localises to the cytoplasm. Required for formate dehydrogenase (FDH) activity. Acts as a sulfur carrier protein that transfers sulfur from IscS to the molybdenum cofactor prior to its insertion into FDH. The polypeptide is Sulfur carrier protein FdhD (Listeria monocytogenes serotype 4b (strain F2365)).